Here is a 141-residue protein sequence, read N- to C-terminus: HTH-type transcriptional repressor NsrR (141 aa).

An HTH rrf2-type domain is found at 2–129 (QLTSFTDYAL…DECTIESLLS (128 aa)). A DNA-binding region (H-T-H motif) is located at residues 28–51 (ITEVTDLFGVSRNHMVKVINRLGQ). Residues cysteine 91, cysteine 96, and cysteine 102 each contribute to the [2Fe-2S] cluster site.

It depends on [2Fe-2S] cluster as a cofactor.

In terms of biological role, nitric oxide-sensitive repressor of genes involved in protecting the cell against nitrosative stress. May require iron for activity. This Vibrio parahaemolyticus serotype O3:K6 (strain RIMD 2210633) protein is HTH-type transcriptional repressor NsrR.